The primary structure comprises 231 residues: Ribosyldihydronicotinamide dehydrogenase [quinone] (231 aa).

Residues histidine 12, 18–21 (FNGS), and 104–107 (LYWF) contribute to the FAD site. 127 to 129 (FDV) serves as a coordination point for substrate. FAD contacts are provided by residues 148–151 (TTGG) and tyrosine 156. Residues histidine 174 and histidine 178 each coordinate Zn(2+). Residue glutamate 194 participates in FAD binding. Serine 197 is modified (phosphoserine). An FAD-binding site is contributed by arginine 201. Cysteine 223 serves as a coordination point for Zn(2+).

Belongs to the NAD(P)H dehydrogenase (quinone) family. Homodimer. Requires Zn(2+) as cofactor. FAD serves as cofactor.

The protein localises to the cytoplasm. It carries out the reaction 1-(beta-D-ribofuranosyl)-1,4-dihydronicotinamide + a quinone + H(+) = beta-nicotinamide D-riboside + a quinol. Its function is as follows. The enzyme apparently serves as a quinone reductase in connection with conjugation reactions of hydroquinones involved in detoxification pathways as well as in biosynthetic processes such as the vitamin K-dependent gamma-carboxylation of glutamate residues in prothrombin synthesis. The polypeptide is Ribosyldihydronicotinamide dehydrogenase [quinone] (Nqo2) (Rattus norvegicus (Rat)).